The chain runs to 143 residues: Large ribosomal subunit protein eL28y (143 aa).

Belongs to the eukaryotic ribosomal protein eL28 family.

The sequence is that of Large ribosomal subunit protein eL28y (RPL28C) from Arabidopsis thaliana (Mouse-ear cress).